The primary structure comprises 150 residues: Avidin-related protein 2 (150 aa).

The first 24 residues, 1–24 (MVHATSPLLLLLLLSLALVAPSLS), serve as a signal peptide directing secretion. The 122-residue stretch at 26–147 (RKCSLTGEWD…GNNDFTRQHT (122 aa)) folds into the Avidin-like domain. An intrachain disulfide couples Cys-28 to Cys-105. Biotin-binding residues include Asn-36, Ser-40, Tyr-57, Thr-59, and Asp-63. N-linked (GlcNAc...) asparagine glycans are attached at residues Asn-67 and Asn-93. Residues Ser-95, Ser-99, and Asn-140 each contribute to the biotin site.

Homotetramer. In terms of processing, glycosylated.

The protein resides in the secreted. Functionally, forms a strong non-covalent specific complex with biotin. This is Avidin-related protein 2 (AVR2) from Gallus gallus (Chicken).